The primary structure comprises 596 residues: Pentatricopeptide repeat-containing protein At1g80270, mitochondrial (596 aa).

A mitochondrion-targeting transit peptide spans 1–69 (MFALSKVLRR…RALSSSAGTK (69 aa)). The disordered stretch occupies residues 62–119 (LSSSAGTKSDQEEDDLEDGFSELEGSKSGQGSTSSDEDEGKLSADEEEEEELDLIETD). 2 stretches are compositionally biased toward acidic residues: residues 72-82 (QEEDDLEDGFS) and 96-117 (SDED…DLIE). 9 PPR repeats span residues 228–262 (GEVL…GFPL), 263–296 (SGFT…NIKP), 297–331 (SLLT…GVEL), 332–366 (DFQT…SLEA), 367–397 (NRRA…CESK), 399–433 (YFEE…DRRA), 434–468 (SSST…GCRI), 469–503 (EATT…SHTK), and 505–539 (MMNS…GYTS).

It belongs to the PPR family. P subfamily.

It is found in the mitochondrion. The chain is Pentatricopeptide repeat-containing protein At1g80270, mitochondrial from Arabidopsis thaliana (Mouse-ear cress).